Reading from the N-terminus, the 454-residue chain is MTMTMHLGLDYIDSLVEEDENEGIYRCKREMFTDPRLFDLEMKHIFEGNWIYLAHESQIPEKNDYYTTQMGRQPIFITRNKDGELNAFVNACSHRGATLCRFRSGNKATHTCSFHGWTFSNSGKLLKVKDPKGAGYPDSFDCDGSHDLKKVARFASYRGFLFGSLREDVAPLEEFLGESRKVIDMVVDQSPEGLEVLRGSSTYVYEGNWKVQVENGADGYHVSTVHWNYAATQQQRKLRDAGDDIRAMTASSWGGDGGGFYSFENGHQMVWARWGDPKNRPLFAERDRLASEFGEARADWMIGVSRNLCLYPNLYLMDQFGSQLRITRPLSVDRTEITIYCIAPKGETPRRARRVRQYEDFFNVSGMATPDDLEEFRACQEGFAGGGMNDMSRGAKHWIEGPDEGAKEIDLHPKLSGVRSEDEGLFVMQHKYWQQQMIKAVKREQDRLIHAEGV.

The Rieske domain occupies 51 to 148 (IYLAHESQIP…SFDCDGSHDL (98 aa)). Positions 92, 94, 112, and 115 each coordinate [2Fe-2S] cluster. Fe cation contacts are provided by His221 and His226.

It belongs to the bacterial ring-hydroxylating dioxygenase alpha subunit family. This dioxygenase system consists of three proteins: the two subunits of the hydroxylase component (XylX and XylY), and an electron transfer component (XylZ). The cofactor is [2Fe-2S] cluster. Fe cation is required as a cofactor.

It functions in the pathway xenobiotic degradation; toluene degradation. The polypeptide is Toluate 1,2-dioxygenase subunit alpha (xylX) (Pseudomonas putida (Arthrobacter siderocapsulatus)).